We begin with the raw amino-acid sequence, 396 residues long: 1-deoxy-D-xylulose 5-phosphate reductoisomerase (396 aa).

Positions 15, 16, 17, 18, 41, and 129 each coordinate NADPH. K130 lines the 1-deoxy-D-xylulose 5-phosphate pocket. E131 is an NADPH binding site. Residue D155 coordinates Mn(2+). 1-deoxy-D-xylulose 5-phosphate is bound by residues S156, E157, S182, and H205. Mn(2+) is bound at residue E157. G211 contacts NADPH. 1-deoxy-D-xylulose 5-phosphate-binding residues include S218, N223, K224, and E227. Residue E227 coordinates Mn(2+).

This sequence belongs to the DXR family. It depends on Mg(2+) as a cofactor. Mn(2+) is required as a cofactor.

It catalyses the reaction 2-C-methyl-D-erythritol 4-phosphate + NADP(+) = 1-deoxy-D-xylulose 5-phosphate + NADPH + H(+). It participates in isoprenoid biosynthesis; isopentenyl diphosphate biosynthesis via DXP pathway; isopentenyl diphosphate from 1-deoxy-D-xylulose 5-phosphate: step 1/6. Catalyzes the NADPH-dependent rearrangement and reduction of 1-deoxy-D-xylulose-5-phosphate (DXP) to 2-C-methyl-D-erythritol 4-phosphate (MEP). The polypeptide is 1-deoxy-D-xylulose 5-phosphate reductoisomerase (Xanthomonas campestris pv. campestris (strain 8004)).